The sequence spans 473 residues: H(+)/Cl(-) exchange transporter ClcA (473 aa).

Residues 1-32 (MKTDTPSLETPQAARLRRRQLIRQLLERDKTP) are Cytoplasmic-facing. A helical membrane pass occupies residues 33–69 (LAILFMAAVVGTLVGLAAVAFDKGVAWLQNQRMGALV). At 70-76 (HTADNYP) the chain is on the periplasmic side. Residues 77-100 (LLLTVAFLCSAVLAMFGYFLVRKY) form a helical membrane-spanning segment. The short motif at 106–110 (GSGIP) is the Selectivity filter part_1 element. Ser107 serves as a coordination point for chloride. The helical intramembrane region spans 109–116 (IPEIEGAL). The Cytoplasmic segment spans residues 117–123 (EDQRPVR). 2 consecutive transmembrane segments (helical) span residues 124–141 (WWRVLPVKFFGGLGTLGG) and 148–166 (EGPTVQIGGNIGRMVLDIF). The Selectivity filter part_2 motif lies at 146–150 (GREGP). The Cytoplasmic segment spans residues 167 to 176 (RLKGDEARHT). 2 intramembrane regions (helical) span residues 177 to 189 (LLATGAAAGLAAA) and 193 to 201 (PLAGILFII). The Cytoplasmic segment spans residues 202-214 (EEMRPQFRYTLIS). A helical transmembrane segment spans residues 215–232 (IKAVFIGVIMSTIMYRIF). Residues 233–252 (NHEVALIDVGKLSDAPLNTL) lie on the Periplasmic side of the membrane. The helical transmembrane segment at 253–281 (WLYLILGIIFGIFGPIFNKWVLGMQDLLH) threads the bilayer. The Cytoplasmic portion of the chain corresponds to 282–287 (RVHGGN). Residues 288-309 (ITKWVLMGGAIGGLCGLLGFVA) traverse the membrane as a helical segment. The Periplasmic portion of the chain corresponds to 310–329 (PATSGGGFNLIPIATAGNFS). The next 2 membrane-spanning stretches (helical) occupy residues 330-349 (MGMLVFIFVARVITTLLCFS) and 355-376 (GIFAPMLALGTVLGTAFGMVAV). The Selectivity filter part_3 signature appears at 355-359 (GIFAP). The chloride site is built by Ile356 and Phe357. Over 377–386 (ELFPQYHLEA) the chain is Periplasmic. An intramembrane region (helical) is located at residues 387–401 (GTFAIAGMGALLAAS). Positions 402–404 (IRA) form an intramembrane region, note=Loop between two helices. Positions 405–416 (PLTGIILVLEMT) form an intramembrane region, helical. Residues 417 to 421 (DNYQL) constitute an intramembrane region (note=Loop between two helices). The chain crosses the membrane as a helical span at residues 422-438 (ILPMIITGLGATLLAQF). Residues 439–473 (TGGKPLYSAILARTLAKQEAEQLARSKAASASENT) are Cytoplasmic-facing. Position 445 (Tyr445) interacts with chloride.

This sequence belongs to the chloride channel (TC 2.A.49) family. ClcA subfamily. As to quaternary structure, homodimer.

The protein resides in the cell inner membrane. The enzyme catalyses 2 chloride(in) + H(+)(out) = 2 chloride(out) + H(+)(in). Proton-coupled chloride transporter. Functions as antiport system and exchanges two chloride ions for 1 proton. Probably acts as an electrical shunt for an outwardly-directed proton pump that is linked to amino acid decarboxylation, as part of the extreme acid resistance (XAR) response. This chain is H(+)/Cl(-) exchange transporter ClcA, found in Escherichia coli O139:H28 (strain E24377A / ETEC).